A 290-amino-acid chain; its full sequence is Bifunctional protein FolD (290 aa).

Residues 166–168 (GQS), S191, and I232 contribute to the NADP(+) site.

Belongs to the tetrahydrofolate dehydrogenase/cyclohydrolase family. Homodimer.

It carries out the reaction (6R)-5,10-methylene-5,6,7,8-tetrahydrofolate + NADP(+) = (6R)-5,10-methenyltetrahydrofolate + NADPH. The enzyme catalyses (6R)-5,10-methenyltetrahydrofolate + H2O = (6R)-10-formyltetrahydrofolate + H(+). It participates in one-carbon metabolism; tetrahydrofolate interconversion. Catalyzes the oxidation of 5,10-methylenetetrahydrofolate to 5,10-methenyltetrahydrofolate and then the hydrolysis of 5,10-methenyltetrahydrofolate to 10-formyltetrahydrofolate. In Halorhodospira halophila (strain DSM 244 / SL1) (Ectothiorhodospira halophila (strain DSM 244 / SL1)), this protein is Bifunctional protein FolD.